Here is a 319-residue protein sequence, read N- to C-terminus: tRNA uridine(34) hydroxylase (319 aa).

The region spanning 124 to 218 is the Rhodanese domain; the sequence is LDEDTVILDA…YGKNEETKGE (95 aa). Residue Cys-178 is the Cysteine persulfide intermediate of the active site.

The protein belongs to the TrhO family.

The catalysed reaction is uridine(34) in tRNA + AH2 + O2 = 5-hydroxyuridine(34) in tRNA + A + H2O. Functionally, catalyzes oxygen-dependent 5-hydroxyuridine (ho5U) modification at position 34 in tRNAs. This chain is tRNA uridine(34) hydroxylase, found in Listeria welshimeri serovar 6b (strain ATCC 35897 / DSM 20650 / CCUG 15529 / CIP 8149 / NCTC 11857 / SLCC 5334 / V8).